Here is a 304-residue protein sequence, read N- to C-terminus: MHIRILGSAAGGGFPQWNCNCRNCRGVRDGSVAAQPRTQSSIALSDEGERWILCNASPDIRAQIAAFPALQPARRPRDTAIGAIVLLDSQIDHTTGLLSLREGCPHEVWCTQMVHQDLSEGFPLFPMLSHWNGGLRHRPIALDGEPFAIPACPRLRFTAIPLRSSAPPYSPHRGDPHPGDNIGLFVEDLDSAGTLFYAPGLGEVDEALLEWMRRADCLLVDGTLWRDDEMLVCEVGDKLGRQMGHLAQSGPGGMLEVLAKVPAARKVLIHINNTNPILDTASAERAELDASGIEVAWDGMHIQL.

The protein belongs to the PqqB family.

It functions in the pathway cofactor biosynthesis; pyrroloquinoline quinone biosynthesis. Its function is as follows. May be involved in the transport of PQQ or its precursor to the periplasm. This is Coenzyme PQQ synthesis protein B from Pseudomonas aeruginosa (strain LESB58).